We begin with the raw amino-acid sequence, 610 residues long: Elongation factor 4 (610 aa).

In terms of domain architecture, tr-type G spans 11-193 (QRIRNFSIVA…KIVQDIPAPT (183 aa)). GTP is bound by residues 23 to 28 (DHGKST) and 140 to 143 (NKVD).

The protein belongs to the TRAFAC class translation factor GTPase superfamily. Classic translation factor GTPase family. LepA subfamily.

The protein localises to the cell membrane. The catalysed reaction is GTP + H2O = GDP + phosphate + H(+). Its function is as follows. Required for accurate and efficient protein synthesis under certain stress conditions. May act as a fidelity factor of the translation reaction, by catalyzing a one-codon backward translocation of tRNAs on improperly translocated ribosomes. Back-translocation proceeds from a post-translocation (POST) complex to a pre-translocation (PRE) complex, thus giving elongation factor G a second chance to translocate the tRNAs correctly. Binds to ribosomes in a GTP-dependent manner. The chain is Elongation factor 4 from Limosilactobacillus fermentum (strain NBRC 3956 / LMG 18251) (Lactobacillus fermentum).